The following is a 273-amino-acid chain: 4-hydroxy-tetrahydrodipicolinate reductase (273 aa).

Residues 10–15, glutamate 36, 100–102, and 124–127 each bind NAD(+); these read GAGGRM, GTT, and SGNM. Histidine 157 acts as the Proton donor/acceptor in catalysis. Histidine 158 lines the (S)-2,3,4,5-tetrahydrodipicolinate pocket. Lysine 161 serves as the catalytic Proton donor. 167-168 contacts (S)-2,3,4,5-tetrahydrodipicolinate; sequence GT.

The protein belongs to the DapB family.

Its subcellular location is the cytoplasm. It catalyses the reaction (S)-2,3,4,5-tetrahydrodipicolinate + NAD(+) + H2O = (2S,4S)-4-hydroxy-2,3,4,5-tetrahydrodipicolinate + NADH + H(+). The catalysed reaction is (S)-2,3,4,5-tetrahydrodipicolinate + NADP(+) + H2O = (2S,4S)-4-hydroxy-2,3,4,5-tetrahydrodipicolinate + NADPH + H(+). It functions in the pathway amino-acid biosynthesis; L-lysine biosynthesis via DAP pathway; (S)-tetrahydrodipicolinate from L-aspartate: step 4/4. Functionally, catalyzes the conversion of 4-hydroxy-tetrahydrodipicolinate (HTPA) to tetrahydrodipicolinate. The protein is 4-hydroxy-tetrahydrodipicolinate reductase of Rhodopseudomonas palustris (strain BisA53).